The primary structure comprises 217 residues: DNA transformation protein TfoX (217 aa).

This sequence belongs to the Sxy/TfoX family.

Its function is as follows. Required for DNA transformation. Positively regulates genes required for DNA transformation (late competence-specific genes) in association with CRP. Required for expression of the late competence-specific gene, com101A. Required for expression of the dprABC operon. This is DNA transformation protein TfoX from Haemophilus influenzae (strain ATCC 51907 / DSM 11121 / KW20 / Rd).